A 781-amino-acid polypeptide reads, in one-letter code: Tax1-binding protein 1 homolog A (781 aa).

Coiled coils occupy residues 148–453 (NSDI…QGDA) and 488–581 (DVEK…YMRE). Polar residues predominate over residues 441–465 (KLTQQQETQQGDANRNDASTETTLE). Disordered regions lie at residues 441-510 (KLTQ…EEEC) and 630-691 (ETRD…EAPA). The segment covering 484–495 (TVARDVEKSRDE) has biased composition (basic and acidic residues). Over residues 496-510 (EGNEQEEEDEEEEEC) the composition is skewed to acidic residues. Positions 646-656 (RPPPLAPPPWG) are enriched in pro residues. 2 consecutive UBZ1-type zinc fingers follow at residues 716 to 742 (HKQC…VESH) and 743 to 769 (WRVC…VHTH). Residues Cys719, Cys722, His738, His742, Cys746, Cys749, His765, and His769 each contribute to the Zn(2+) site.

As to expression, little expression is observed during pectoral fin development, except for an elevated level of expression in the distal mesenchyme cells of some samples.

In terms of biological role, may have anti-apoptotic activity. The chain is Tax1-binding protein 1 homolog A from Danio rerio (Zebrafish).